The chain runs to 397 residues: tRNA pseudouridine synthase D (397 aa).

Asp76 (nucleophile) is an active-site residue. The TRUD domain maps to 151–361; that stretch reads GVPNFFGEQR…MEGERRPLRV (211 aa).

The protein belongs to the pseudouridine synthase TruD family.

It carries out the reaction uridine(13) in tRNA = pseudouridine(13) in tRNA. Responsible for synthesis of pseudouridine from uracil-13 in transfer RNAs. This is tRNA pseudouridine synthase D from Geotalea daltonii (strain DSM 22248 / JCM 15807 / FRC-32) (Geobacter daltonii).